The following is a 180-amino-acid chain: uncharacterized protein (180 aa).

The N-acetyltransferase domain maps to 45–180 (FVFSQVRTLD…GNRCAFWYAN (136 aa)).

The protein belongs to the acetyltransferase family. Ycf52 subfamily.

This is an uncharacterized protein from Prochlorococcus marinus (strain SARG / CCMP1375 / SS120).